We begin with the raw amino-acid sequence, 607 residues long: Methylmalonate-semialdehyde dehydrogenase [acylating], mitochondrial (607 aa).

Residues 1 to 69 (MVRVKQKNLE…KLRSSSSTTT (69 aa)) form a disordered region. A mitochondrion-targeting transit peptide spans 1-98 (MVRVKQKNLE…QFLALRSSWL (98 aa)). Residues 9-30 (LESYRSNGTYPPTWRNPTTSFA) show a composition bias toward polar residues. Basic residues predominate over residues 42-51 (LKSKTKRRRL). The NAD(+) site is built by F259, K283, E286, K287, and S336. C391 (nucleophile) is an active-site residue. E491 serves as a coordination point for NAD(+).

Belongs to the aldehyde dehydrogenase family.

It localises to the mitochondrion. It catalyses the reaction 2-methyl-3-oxopropanoate + NAD(+) + CoA + H2O = propanoyl-CoA + hydrogencarbonate + NADH + H(+). This is Methylmalonate-semialdehyde dehydrogenase [acylating], mitochondrial (ALDH6B2) from Arabidopsis thaliana (Mouse-ear cress).